We begin with the raw amino-acid sequence, 345 residues long: Cytoplasmic envelopment protein 2 (345 aa).

A nuclear localization signal 1 region spans residues 26–35; sequence KLVGKSRKHR. Residues 55–63 form a nuclear export signal region; that stretch reads CILCQLLLL. Residues 90–94 are nuclear localization signal 2; the sequence is RRRRR.

This sequence belongs to the herpesviridae cytoplasmic envelopment protein 2 family. As to quaternary structure, interacts with cytoplasmic envelopment protein 3 and with the capsid. Interacts with host STING1; this interaction prevents viral DNA-triggered antiviral immune response.

It is found in the virion tegument. The protein resides in the host cytoplasm. It localises to the host nucleus. Its function is as follows. Plays a critical role in cytoplasmic virus egress. Participates in the final step of tegumentation and envelope acquisition within the host cytoplasm by directly interacting with the capsid. Upon virion binding to target cell, a signaling cascade is triggered to disrupt the interaction with the capsid, thereby preparing capsid uncoating. Additionally, antagonizes the viral DNA-triggered antiviral immune response by targeting host STING1 and preventing its dimerization and trafficking. In Human cytomegalovirus (strain AD169) (HHV-5), this protein is Cytoplasmic envelopment protein 2 (UL94).